A 234-amino-acid chain; its full sequence is UPF0173 metal-dependent hydrolase RHECIAT_CH0001941 (234 aa).

This sequence belongs to the UPF0173 family.

The sequence is that of UPF0173 metal-dependent hydrolase RHECIAT_CH0001941 from Rhizobium etli (strain CIAT 652).